A 156-amino-acid chain; its full sequence is ATP synthase subunit b (156 aa).

The helical transmembrane segment at 11-31 (LIAFALFVWFCMKFVWPPIIN) threads the bilayer.

It belongs to the ATPase B chain family. As to quaternary structure, F-type ATPases have 2 components, F(1) - the catalytic core - and F(0) - the membrane proton channel. F(1) has five subunits: alpha(3), beta(3), gamma(1), delta(1), epsilon(1). F(0) has three main subunits: a(1), b(2) and c(10-14). The alpha and beta chains form an alternating ring which encloses part of the gamma chain. F(1) is attached to F(0) by a central stalk formed by the gamma and epsilon chains, while a peripheral stalk is formed by the delta and b chains.

The protein localises to the cell inner membrane. Functionally, f(1)F(0) ATP synthase produces ATP from ADP in the presence of a proton or sodium gradient. F-type ATPases consist of two structural domains, F(1) containing the extramembraneous catalytic core and F(0) containing the membrane proton channel, linked together by a central stalk and a peripheral stalk. During catalysis, ATP synthesis in the catalytic domain of F(1) is coupled via a rotary mechanism of the central stalk subunits to proton translocation. In terms of biological role, component of the F(0) channel, it forms part of the peripheral stalk, linking F(1) to F(0). The sequence is that of ATP synthase subunit b from Haemophilus influenzae (strain PittGG).